A 783-amino-acid chain; its full sequence is MAACRYCCSCLRLRPLSDGPFCLPGRDRALTQLLVRALWSSTGSRAVAVDLGNRKLEISSGKLARFADGSAVVQSGDTAVMVTAVSKTKPSPSQFMPLVVDYRQKAAAAGRIPTNYLRREIGTSDKEILTSRIIDRSIRPLFPAGYFYDTQVLCNLLAVDGVNEPDVLAINGASVALSLSDIPWNGPVGAVRIGIIDGECVVNPTRKEMSSSTLNLVVAGAPKSQIVMLEASAENILQQDFCHAIKVGVKYTQQIIQGIQQLVKETGVTKRTPQKLFTPSPEIVKHTHKLAMERLYAVFTDYEHDKVSRDEAVNKIRLDTEEQLKEKFPQADPYEIIESFNVVAKEVFRNIILNEYKRCDGRDLTSLRNVSCEVDMFKTLHGSALFQRGQTQVLCTVTFDSLESGIKSDQVITAINGIKDKNFMLHYEFPPYATNEIGKVTGLNRRELGHGALAEKALYPVIPRDFPFTIRVTSEVLESNGSSSMASACGGSLALMDSGVPISSAVAGVAIGLVTKTDPEKGEIEDYRLLTDILGIEDYNGDMDFKIAGTNKGITALQADIKLPGIPIKIVMEAIQQASVAKKEILQIMNKTISKPRTSRKENGPVVETVQVPLSKRAKFVGPGGYNLKKLQAETGVTISQVDEETFSVFAPTPSALHEARDFITEICKDDQEQQLEFGAVYTATITEIRDTGVMVKLYPNMTAVLLHNTQLDQRKIRHPTALGLEVGQEIQVKYFGRDPADGRMRLSRKVLQSPATTVVRTLNDRSSIVMGEPISQSSSNSQ.

Residues 1-46 (MAACRYCCSCLRLRPLSDGPFCLPGRDRALTQLLVRALWSSTGSRA) constitute a mitochondrion transit peptide. N6-acetyllysine is present on residues Lys-250, Lys-264, Lys-285, and Lys-289. The residue at position 552 (Lys-552) is an N6-succinyllysine. The KH domain occupies 605–664 (PVVETVQVPLSKRAKFVGPGGYNLKKLQAETGVTISQVDEETFSVFAPTPSALHEARDFI). Residues 679-750 (GAVYTATITE…ADGRMRLSRK (72 aa)) form the S1 motif domain. A phosphoserine mark is found at Ser-754 and Ser-782.

The protein belongs to the polyribonucleotide nucleotidyltransferase family. Homotrimer; in free form. Homooligomer. Component of the mitochondrial degradosome (mtEXO) complex which is a heteropentamer containing 2 copies of SUPV3L1 and 3 copies of PNPT1. As part of the mitochondrial degradosome complex, interacts with GRSF1 in an RNA-dependent manner; the interaction enhances the activity of the complex. Interacts with TCL1A; the interaction has no effect on PNPT1 exonuclease activity.

The protein resides in the cytoplasm. The protein localises to the mitochondrion matrix. It is found in the mitochondrion intermembrane space. The catalysed reaction is RNA(n+1) + phosphate = RNA(n) + a ribonucleoside 5'-diphosphate. Functionally, RNA-binding protein implicated in numerous RNA metabolic processes. Catalyzes the phosphorolysis of single-stranded polyribonucleotides processively in the 3'-to-5' direction. Mitochondrial intermembrane factor with RNA-processing exoribonulease activity. Component of the mitochondrial degradosome (mtEXO) complex, that degrades 3' overhang double-stranded RNA with a 3'-to-5' directionality in an ATP-dependent manner. Involved in the degradation of non-coding mitochondrial transcripts (MT-ncRNA) and tRNA-like molecules. Required for correct processing and polyadenylation of mitochondrial mRNAs. Plays a role as a cytoplasmic RNA import factor that mediates the translocation of small RNA components like the 5S RNA, the RNA subunit of ribonuclease P and the mitochondrial RNA-processing (MRP) RNA, into the mitochondrial matrix. Plays a role in mitochondrial morphogenesis and respiration; regulates the expression of the electron transport chain (ETC) components at the mRNA and protein levels. In the cytoplasm, shows a 3'-to-5' exoribonuclease mediating mRNA degradation activity; degrades c-myc mRNA upon treatment with IFNB1/IFN-beta, resulting in a growth arrest in melanoma cells. Regulates the stability of specific mature miRNAs in melanoma cells; specifically and selectively degrades miR-221, preferentially. Also plays a role in RNA cell surveillance by cleaning up oxidized RNAs. Binds to the RNA subunit of ribonuclease P, MRP RNA and miR-221 microRNA. The sequence is that of Polyribonucleotide nucleotidyltransferase 1, mitochondrial (PNPT1) from Pongo abelii (Sumatran orangutan).